Consider the following 394-residue polypeptide: Chalcone synthase 8 (394 aa).

Residue C165 is part of the active site.

This sequence belongs to the thiolase-like superfamily. Chalcone/stilbene synthases family.

It carries out the reaction (E)-4-coumaroyl-CoA + 3 malonyl-CoA + 3 H(+) = 2',4,4',6'-tetrahydroxychalcone + 3 CO2 + 4 CoA. It participates in secondary metabolite biosynthesis; flavonoid biosynthesis. Its function is as follows. The primary product of this enzyme is 4,2',4',6'-tetrahydroxychalcone (also termed naringenin-chalcone or chalcone) which can under specific conditions spontaneously isomerize into naringenin. This chain is Chalcone synthase 8 (CHS8), found in Bromheadia finlaysoniana (Orchid).